The primary structure comprises 844 residues: Rho guanine nucleotide exchange factor 33 (844 aa).

Basic and acidic residues-rich tracts occupy residues 1–13 (MEKTKTKQGENEH) and 101–113 (QQKIEQLQQEKRR). Disordered regions lie at residues 1–20 (MEKTKTKQGENEHMPVNNPS), 101–142 (QQKI…GSPF), and 169–189 (AQESRSVHVGDSNVKGMMGPG). The stretch at 54-129 (LEEKVKSCRC…AKKTQKEEHS (76 aa)) forms a coiled coil. Positions 130–142 (SQAGPAQAQGSPF) are enriched in polar residues. Residues 265–440 (KRQTVALELL…RVFISHYTLL (176 aa)) form the DH domain. Disordered stretches follow at residues 498–541 (LQPY…DWEL), 668–687 (RPEHPLQPLPKSATSPAGSS), and 702–745 (AKPL…RAAQ). R757 is modified (omega-N-methylarginine). Positions 787–800 (DTTRFCPKEERESE) are enriched in basic and acidic residues. Residues 787-844 (DTTRFCPKEERESEQTSFSDQNPRQDQKGGFRSSFRKLFKKKNGNATGEDFCGPWGWW) form a disordered region. Residues 820–829 (SFRKLFKKKN) are compositionally biased toward basic residues.

In terms of biological role, may act as a guanine-nucleotide releasing factor. This is Rho guanine nucleotide exchange factor 33 (ARHGEF33) from Homo sapiens (Human).